Consider the following 295-residue polypeptide: Putative S-adenosyl-L-methionine-dependent methyltransferase Mvan_0910 (295 aa).

Residues Asp-126 and 155 to 156 (DL) contribute to the S-adenosyl-L-methionine site.

Belongs to the UPF0677 family.

In terms of biological role, exhibits S-adenosyl-L-methionine-dependent methyltransferase activity. In Mycolicibacterium vanbaalenii (strain DSM 7251 / JCM 13017 / BCRC 16820 / KCTC 9966 / NRRL B-24157 / PYR-1) (Mycobacterium vanbaalenii), this protein is Putative S-adenosyl-L-methionine-dependent methyltransferase Mvan_0910.